The primary structure comprises 1001 residues: Translation initiation factor IF-2 (1001 aa).

The tract at residues 56–418 is disordered; that stretch reads PDYVHDPNAV…VEAGPPPISR (363 aa). Residues 70 to 84 are compositionally biased toward basic and acidic residues; it reads TEAHEERHEHEEAHE. Over residues 85 to 108 the composition is skewed to low complexity; that stretch reads PAAAPKAAVEPETPVAPAPEAAPA. The span at 109–120 shows a compositional bias: basic and acidic residues; the sequence is AKEERPAPEEPA. 6 stretches are compositionally biased toward pro residues: residues 136-170, 180-194, 204-217, 229-252, 305-322, and 345-357; these read IHPP…PHAP, PARP…PSQT, RPAP…PTTT, QPFP…PPQQ, PAAP…PVPG, and GMPP…PRPQ. Basic and acidic residues predominate over residues 379–410; it reads SRGRPGDRRPVRQQRERTEEEKILRPQRRHVE. A tr-type G domain is found at 499–668; it reads RRAPVVTIMG…LLVADMQDLK (170 aa). A G1 region spans residues 508–515; that stretch reads GHVDHGKT. 508 to 515 serves as a coordination point for GTP; it reads GHVDHGKT. Residues 533–537 are G2; that stretch reads GITQH. Residues 554-557 form a G3 region; that stretch reads DTPG. GTP-binding positions include 554–558 and 608–611; these read DTPGH and NKID. Residues 608-611 are G4; the sequence is NKID. Residues 644–646 are G5; that stretch reads SAR.

Belongs to the TRAFAC class translation factor GTPase superfamily. Classic translation factor GTPase family. IF-2 subfamily.

The protein localises to the cytoplasm. Functionally, one of the essential components for the initiation of protein synthesis. Protects formylmethionyl-tRNA from spontaneous hydrolysis and promotes its binding to the 30S ribosomal subunits. Also involved in the hydrolysis of GTP during the formation of the 70S ribosomal complex. The protein is Translation initiation factor IF-2 of Solibacter usitatus (strain Ellin6076).